The sequence spans 1829 residues: Iron-regulated protein FrpC (1829 aa).

22 Hemolysin-type calcium-binding repeats span residues 869–886, 887–904, 1015–1032, 1033–1050, 1051–1068, 1069–1086, 1087–1104, 1215–1232, 1233–1250, 1251–1268, 1269–1286, 1287–1304, 1415–1432, 1433–1450, 1451–1468, 1469–1486, 1487–1504, 1615–1632, 1633–1650, 1651–1668, 1669–1686, and 1687–1704; these read FGHNKNVSLYGNDGNDTL, IGGAGNDYLEGGSGSDTY, NGGLGDDYLYGADGDDLL, NGDAGNDSIYSGNGNDTL, DGGEGNDALYGYNGNDAL, NGGEGNDHLNGEDGNDTL, and NGGEGNDALYGYNGNDAL. Residues 1671–1690 form a disordered region; the sequence is GEGNDHLNGEDGNDTLIGGA.

The protein belongs to the RTX prokaryotic toxin (TC 1.C.11) family.

The protein resides in the cell outer membrane. The protein localises to the secreted. Its function is as follows. May participate in the pathogenesis of meningococcal disease. In Neisseria meningitidis serogroup B (strain ATCC BAA-335 / MC58), this protein is Iron-regulated protein FrpC (frpC).